We begin with the raw amino-acid sequence, 343 residues long: Transcription factor BPE (343 aa).

Residues 142 to 192 form the bHLH domain; sequence QATDSHSLAERARREKISERMKILQDLVPGCNKVIGKALVLDEIINYIQSL.

In terms of assembly, homodimer. In terms of tissue distribution, specifically expressed in flowers, mostly in petals, inflorescence and flower buds. As to expression, expressed ubiquitously (leaves, flowers and stems).

The protein localises to the nucleus. Functionally, involved in the control of petal size, by interfering with postmitotic cell expansion to limit final petal cell size. The polypeptide is Transcription factor BPE (BPE) (Arabidopsis thaliana (Mouse-ear cress)).